The following is a 289-amino-acid chain: Cyclin-dependent kinase 2 homolog (289 aa).

A Protein kinase domain is found at 4–285 (YHGLEKIGEG…AKQAIEHPYF (282 aa)). Residues 10 to 18 (IGEGTYGVV) and lysine 32 each bind ATP. Threonine 14 is subject to Phosphothreonine. Tyrosine 15 carries the phosphotyrosine modification. Aspartate 126 functions as the Proton acceptor in the catalytic mechanism. Phosphothreonine is present on threonine 159.

Belongs to the protein kinase superfamily. CMGC Ser/Thr protein kinase family. CDC2/CDKX subfamily. As to quaternary structure, may form a complex composed of at least the catalytic subunit CRK2 and a cyclin. It depends on Mg(2+) as a cofactor.

The protein resides in the cytoplasm. The enzyme catalyses L-seryl-[protein] + ATP = O-phospho-L-seryl-[protein] + ADP + H(+). It carries out the reaction L-threonyl-[protein] + ATP = O-phospho-L-threonyl-[protein] + ADP + H(+). The catalysed reaction is [DNA-directed RNA polymerase] + ATP = phospho-[DNA-directed RNA polymerase] + ADP + H(+). Its activity is regulated as follows. Phosphorylation at Thr-14 or Tyr-15 inactivates the enzyme, while phosphorylation at Thr-159 activates it. In terms of biological role, serine/threonine-protein kinase. Involved in the control of the cell cycle. Required for entry into S-phase and mitosis. Probable component of the kinase complex that phosphorylates the repetitive C-terminus of RNA polymerase II. The chain is Cyclin-dependent kinase 2 homolog from Plasmodium yoelii yoelii.